A 234-amino-acid polypeptide reads, in one-letter code: Leucyl/phenylalanyl-tRNA--protein transferase (234 aa).

The protein belongs to the L/F-transferase family.

It localises to the cytoplasm. It catalyses the reaction N-terminal L-lysyl-[protein] + L-leucyl-tRNA(Leu) = N-terminal L-leucyl-L-lysyl-[protein] + tRNA(Leu) + H(+). It carries out the reaction N-terminal L-arginyl-[protein] + L-leucyl-tRNA(Leu) = N-terminal L-leucyl-L-arginyl-[protein] + tRNA(Leu) + H(+). The enzyme catalyses L-phenylalanyl-tRNA(Phe) + an N-terminal L-alpha-aminoacyl-[protein] = an N-terminal L-phenylalanyl-L-alpha-aminoacyl-[protein] + tRNA(Phe). In terms of biological role, functions in the N-end rule pathway of protein degradation where it conjugates Leu, Phe and, less efficiently, Met from aminoacyl-tRNAs to the N-termini of proteins containing an N-terminal arginine or lysine. The polypeptide is Leucyl/phenylalanyl-tRNA--protein transferase (Shigella dysenteriae serotype 1 (strain Sd197)).